The following is an 853-amino-acid chain: Dynein axonemal assembly factor 5 (853 aa).

Ala-2 carries the N-acetylalanine modification. HEAT repeat units follow at residues 69–107, 200–238, 240–276, 278–316, 374–412, 597–636, 694–732, 736–774, and 782–820; these read GPWA…RAAR, HMQS…FGSG, SVDD…NLRD, YSFL…QWQQ, RVKA…DEEK, GEAL…RPKD, QEAQ…NSGD, PEKF…CIES, and QSSV…LFPD.

This sequence belongs to the DNAAF5 family. In terms of assembly, interacts with DNAI2; probably involved in outer arm dynein assembly. As to expression, expressed in ciliated cells including ependymal cells lining the lateral ventricles and multiciliated epithelium of oviduct ampulla.

The protein localises to the cytoplasm. It localises to the cytoplasmic granule. Functionally, cytoplasmic protein involved in the delivery of the dynein machinery to the motile cilium. It is required for the assembly of the axonemal dynein inner and outer arms, two structures attached to the peripheral outer doublet A microtubule of the axoneme, that play a crucial role in cilium motility. This Mus musculus (Mouse) protein is Dynein axonemal assembly factor 5.